A 327-amino-acid polypeptide reads, in one-letter code: Cytochrome c oxidase subunit 2 (327 aa).

An N-terminal signal peptide occupies residues methionine 1–tryptophan 23. The next 2 helical transmembrane spans lie at leucine 56–glutamate 78 and alanine 96–glutamine 114. Cu cation is bound by residues histidine 221, cysteine 255, cysteine 259, and histidine 263.

This sequence belongs to the cytochrome c oxidase subunit 2 family. Requires Cu cation as cofactor.

The protein localises to the cell membrane. It carries out the reaction 4 Fe(II)-[cytochrome c] + O2 + 8 H(+)(in) = 4 Fe(III)-[cytochrome c] + 2 H2O + 4 H(+)(out). Subunits I and II form the functional core of the enzyme complex. Electrons originating in cytochrome c are transferred via heme a and Cu(A) to the binuclear center formed by heme a3 and Cu(B). In Thermostichus vulcanus (Synechococcus vulcanus), this protein is Cytochrome c oxidase subunit 2 (ctaC).